The sequence spans 83 residues: Beta-defensin 19 (83 aa).

A signal peptide spans Met1–Ser19. 3 disulfide bridges follow: Cys27/Cys54, Cys34/Cys48, and Cys38/Cys55.

Belongs to the beta-defensin family. In terms of tissue distribution, specifically expressed in male gonads (Sertoli cells).

The protein localises to the secreted. Functionally, has antibacterial activity. This is Beta-defensin 19 (Defb19) from Mus musculus (Mouse).